An 83-amino-acid chain; its full sequence is Large ribosomal subunit protein eL43 (83 aa).

Zn(2+) contacts are provided by cysteine 38, cysteine 41, cysteine 56, and cysteine 59. The segment at 38 to 59 (CPVCGRKAVKRISTGIWQCQKC) adopts a C4-type zinc-finger fold.

It belongs to the eukaryotic ribosomal protein eL43 family. Putative zinc-binding subfamily. In terms of assembly, part of the 50S ribosomal subunit. Zn(2+) is required as a cofactor.

Its function is as follows. Binds to the 23S rRNA. The sequence is that of Large ribosomal subunit protein eL43 from Pyrococcus furiosus (strain ATCC 43587 / DSM 3638 / JCM 8422 / Vc1).